Consider the following 95-residue polypeptide: TBK1 inhibitor DP96R (95 aa).

This sequence belongs to the asfivirus DP96R family.

Functionally, inhibits cGAS-STING-mediated type I IFN expression and NF-kB activation by inhibiting TBK1 and IKBKB/IKKB. Inhibits host TBK1 phosphorylation. This is TBK1 inhibitor DP96R from Ornithodoros (relapsing fever ticks).